A 108-amino-acid polypeptide reads, in one-letter code: UPF0145 protein LACR_1006 (108 aa).

The protein belongs to the UPF0145 family.

In Lactococcus lactis subsp. cremoris (strain SK11), this protein is UPF0145 protein LACR_1006.